A 190-amino-acid polypeptide reads, in one-letter code: Mitochondrial inner membrane protease subunit 1 (190 aa).

Catalysis depends on residues serine 40 and lysine 84.

The protein belongs to the peptidase S26 family. IMP1 subfamily. Component of the mitochondrial inner membrane peptidase (IMP) complex which at least consists of IMP1, IMP2 and SOM1.

It is found in the mitochondrion inner membrane. Its function is as follows. Catalytic component of the mitochondrial inner membrane peptidase (IMP) complex. IMP catalyzes the removal of signal peptides required for the targeting of proteins from the mitochondrial matrix, across the inner membrane, into the inter-membrane space. The two catalytic IMP subunits seem to have non-overlapping substrate specificities. IMP1 substrates include nuclear encoded CYB2, mitochondrially encoded COX2, NADH-cytochrome b5 reductase and GUT2. This Saccharomyces cerevisiae (strain ATCC 204508 / S288c) (Baker's yeast) protein is Mitochondrial inner membrane protease subunit 1 (IMP1).